The following is a 251-amino-acid chain: Insulin-induced gene 1 protein (251 aa).

Over 1–58 the chain is Cytoplasmic; it reads MQTLEEHCWSCSCTRGRDKKGTKVSAWLARRVGKAMSSLNSLLSLAYSTLASSEGRSL. The chain crosses the membrane as a helical span at residues 59-81; sequence IQRSLVLFTVGVFLALVLNLLQI. Over 82–100 the chain is Extracellular; that stretch reads QRNVTLFPEEVIATIFSSA. Residues 101–118 form a helical membrane-spanning segment; the sequence is WWVPPCCGTAAAVVGLLY. Residues 119 to 133 are Cytoplasmic-facing; the sequence is PCIDSRIGEPHKFKR. Residues 134 to 156 form a helical membrane-spanning segment; that stretch reads EWASVMRCIAVFVGINHASAKLD. Topologically, residues 157–159 are extracellular; the sequence is FAN. The helical transmembrane segment at 160–178 threads the bilayer; the sequence is NVQLSLTLAALSLGLWWTF. Residues 179–183 are Cytoplasmic-facing; sequence DRSRS. The chain crosses the membrane as a helical span at residues 184-205; the sequence is GLGLGITIAFLATLITQFLVYN. Topologically, residues 206-219 are extracellular; the sequence is GVYQYTSPDFLYIR. The chain crosses the membrane as a helical span at residues 220–237; that stretch reads SWLPCIFFSGGVTVGNIG. Over 238-251 the chain is Cytoplasmic; the sequence is RQLAMGSSEKTHGD. The short motif at 245–251 is the KxHxx element; the sequence is SEKTHGD.

The protein belongs to the INSIG family. As to quaternary structure, interacts with scap; interaction is direct and only takes place in the presence of sterols; it prevents interaction between scap and the coat protein complex II (COPII). Associates with the SCAP-SREBP complex; association is mediated via its interaction with scap and only takes place in the presence of sterols.

It is found in the endoplasmic reticulum membrane. Oxysterol-binding protein that mediates feedback control of cholesterol synthesis by controlling both endoplasmic reticulum to Golgi transport of scap and degradation of hmgcr. Acts as a negative regulator of cholesterol biosynthesis by mediating the retention of the SCAP-SREBP complex in the endoplasmic reticulum, thereby blocking the processing of sterol regulatory element-binding proteins (SREBPs). Binds oxysterol, including 25-hydroxycholesterol, regulating interaction with scap and retention of the SCAP-SREBP complex in the endoplasmic reticulum. In presence of oxysterol, interacts with scap, retaining the SCAP-SREBP complex in the endoplasmic reticulum, thereby preventing scap from escorting SREBPs to the Golgi. Sterol deprivation reduces oxysterol-binding, disrupting the interaction between insig1 and scap, thereby promoting Golgi transport of the SCAP-SREBP complex, followed by processing and nuclear translocation of SREBPs. Also regulates cholesterol synthesis by regulating degradation of hmgcr. This Xenopus laevis (African clawed frog) protein is Insulin-induced gene 1 protein.